The following is a 1487-amino-acid chain: Probable lysine-specific demethylase SE14 (1487 aa).

The segment at 1–23 (MPPQPPPAASASASAPDPAVPAW) is disordered. Residues 9–22 (ASASASAPDPAVPA) are compositionally biased toward low complexity. Positions 30-71 (APEYRPTESEFADPIAFLSRVEREAAAYGICKVIPPHPRPSR) constitute a JmjN domain. Over residues 86–104 (CDAPAPSPAAASDSSIPPS) the composition is skewed to low complexity. The interval 86-113 (CDAPAPSPAAASDSSIPPSSSSPPPVSA) is disordered. The JmjC domain occupies 232–398 (NSPWNLQAIA…FAKEAAVRRA (167 aa)). 3 residues coordinate Fe cation: His275, Glu277, and His366. 2 disordered regions span residues 494 to 555 (SCSK…DDGD) and 684 to 718 (YGDTETPEKKIPSDCPGSELSKQSGRGDVNVPDVE). Basic and acidic residues-rich tracts occupy residues 498 to 507 (APEKKGEDGP) and 542 to 551 (QAPEGEKLDT). The C2H2-type 1; degenerate zinc-finger motif lies at 1377-1400 (FQCDIEFCDMTFETKAELRAHQRN). 3 C2H2-type zinc fingers span residues 1400–1424 (NICTDESCGKRFSSHKYLKRHQCVH), 1430–1454 (FKCPWDGCPMTFKWLWAQTEHIRVH), and 1460–1486 (YKCSAPDCGQSFRYVSDYSRHRKKFNH).

Fe(2+) is required as a cofactor.

It is found in the nucleus. Functionally, histone demethylase that demethylates 'Lys-4' (H3K4me) of histone H3. Involved in the control of flowering time. Has a suppressive effect on floral transition under long day conditions through the demethylation of H3K4me3 in the promoter region of the flower-promoting signal HD3B/RFT1. The polypeptide is Probable lysine-specific demethylase SE14 (SE14) (Oryza sativa subsp. japonica (Rice)).